We begin with the raw amino-acid sequence, 482 residues long: Cytochrome P450 monooxygenase pynD (482 aa).

A signal peptide spans 1 to 22 (MWRIPVIVALVAGLLYWVRKQG). N-linked (GlcNAc...) asparagine glycosylation occurs at asparagine 401. Cysteine 417 contributes to the heme binding site.

This sequence belongs to the cytochrome P450 family. Heme is required as a cofactor.

It participates in secondary metabolite biosynthesis. Its function is as follows. Cytochrome P450 monooxygenase; part of the gene cluster that mediates the biosynthesis of pyranonigrins, a family of antioxidative compounds. The first step of pyranonigrins biosynthesis is performed by the hybrid PKS-NRPS synthetase that condenses 6 malonyl-CoA units to an acetyl starter unit, to form a 1,3,5-trioxotetradecane-6,8-dienyl-ACP. The enoyl reductase (ER) domain of pynA is likely to be functional during the first two rounds of polyketide chain extension, to generate the saturated C-C bonds of the alkyl side chain. PynA subsequently forms the amide bond between the acyl chain and L-serine. Although pynA has a terminal reductase domain, it appears to require the thioesterase pynI for the release of the straight-chain intermediate from pynA via the formation of a tetramic acid pyranonigrin J. The methyltransferase pynC then coverts pyranonigrin J to pyranonigrin I via N-methylation. The FAD-dependent monooxygenase pynG catalyzes an epoxidation-mediated cyclization to form the dihydro-gamma-pyrone moiety, followed by pynD-catalyzed oxidation of the alcohol to the ketone and enolization to yield the characteristic tetramic acid-fused gamma-pyrone core of pyranonigrin H. Pyranonigrin H is substrate of pynH for dehydration-mediated exo-methylene formation from the serine side chain to produce pyranonigrin E, before the oxidase pynE reduces the exo-methylene of pyranonigrin E into a pendant methyl to form pyranonigrin G. The FAD-linked oxidoreductase pynB performs the reverse reaction and converts pyranonigrin G back to pyranonigrin E. This is Cytochrome P450 monooxygenase pynD from Aspergillus niger (strain ATCC MYA-4892 / CBS 513.88 / FGSC A1513).